The primary structure comprises 245 residues: MVAVSGTQRTRTVSLARWAVYAGSVFAGAWLATQLFYLAQIALWLFVNPGSTAFMRTDAWWLSRDTPPAQIRHQWVPYDQISRNLKRALIASEDSTFATNNGYDVDAILQAWEKNKARGRIVAGGSTITQQLARNLFLSREKSYIRKGQELIITWMLETVLDKERIFEIYLNSVEWGRGVYGAEAAARYYYKIPASRLGAWQSARLAVMLPKPRWFDAHRGSAYQAQRAAVIARRMGAAELPQSE.

A helical transmembrane segment spans residues 20–42; the sequence is VYAGSVFAGAWLATQLFYLAQIA.

The protein belongs to the glycosyltransferase 51 family.

It is found in the cell inner membrane. It catalyses the reaction [GlcNAc-(1-&gt;4)-Mur2Ac(oyl-L-Ala-gamma-D-Glu-L-Lys-D-Ala-D-Ala)](n)-di-trans,octa-cis-undecaprenyl diphosphate + beta-D-GlcNAc-(1-&gt;4)-Mur2Ac(oyl-L-Ala-gamma-D-Glu-L-Lys-D-Ala-D-Ala)-di-trans,octa-cis-undecaprenyl diphosphate = [GlcNAc-(1-&gt;4)-Mur2Ac(oyl-L-Ala-gamma-D-Glu-L-Lys-D-Ala-D-Ala)](n+1)-di-trans,octa-cis-undecaprenyl diphosphate + di-trans,octa-cis-undecaprenyl diphosphate + H(+). The protein operates within cell wall biogenesis; peptidoglycan biosynthesis. In terms of biological role, peptidoglycan polymerase that catalyzes glycan chain elongation from lipid-linked precursors. In Burkholderia cenocepacia (strain HI2424), this protein is Biosynthetic peptidoglycan transglycosylase.